A 254-amino-acid chain; its full sequence is 5'-nucleotidase SurE (254 aa).

The a divalent metal cation site is built by Asp8, Asp9, Ser39, and Asn91.

It belongs to the SurE nucleotidase family. A divalent metal cation serves as cofactor.

It is found in the cytoplasm. The catalysed reaction is a ribonucleoside 5'-phosphate + H2O = a ribonucleoside + phosphate. Its function is as follows. Nucleotidase that shows phosphatase activity on nucleoside 5'-monophosphates. The protein is 5'-nucleotidase SurE of Methylibium petroleiphilum (strain ATCC BAA-1232 / LMG 22953 / PM1).